A 207-amino-acid chain; its full sequence is Dephospho-CoA kinase (207 aa).

The 197-residue stretch at 11–207 (RIGLTGGIAS…LLKMSPTAEL (197 aa)) folds into the DPCK domain. 19–24 (ASGKSS) lines the ATP pocket.

The protein belongs to the CoaE family.

The protein localises to the cytoplasm. It catalyses the reaction 3'-dephospho-CoA + ATP = ADP + CoA + H(+). The protein operates within cofactor biosynthesis; coenzyme A biosynthesis; CoA from (R)-pantothenate: step 5/5. In terms of biological role, catalyzes the phosphorylation of the 3'-hydroxyl group of dephosphocoenzyme A to form coenzyme A. This chain is Dephospho-CoA kinase, found in Synechococcus sp. (strain CC9605).